A 368-amino-acid chain; its full sequence is 3-isopropylmalate dehydrogenase (368 aa).

79 to 91 provides a ligand contact to NAD(+); it reads GPEWGTSSTVRPE. Residues arginine 98, arginine 108, arginine 137, and aspartate 226 each contribute to the substrate site. Residues aspartate 226, aspartate 251, and aspartate 255 each coordinate Mg(2+). 291 to 303 contributes to the NAD(+) binding site; it reads GSAPDISGKGIVN.

The protein belongs to the isocitrate and isopropylmalate dehydrogenases family. As to quaternary structure, homodimer. It depends on Mg(2+) as a cofactor. Mn(2+) is required as a cofactor.

It is found in the cytoplasm. It carries out the reaction (2R,3S)-3-isopropylmalate + NAD(+) = 4-methyl-2-oxopentanoate + CO2 + NADH. It functions in the pathway amino-acid biosynthesis; L-leucine biosynthesis; L-leucine from 3-methyl-2-oxobutanoate: step 3/4. Catalyzes the oxidation of 3-carboxy-2-hydroxy-4-methylpentanoate (3-isopropylmalate) to 3-carboxy-4-methyl-2-oxopentanoate. The product decarboxylates to 4-methyl-2 oxopentanoate. This Neurospora crassa (strain ATCC 24698 / 74-OR23-1A / CBS 708.71 / DSM 1257 / FGSC 987) protein is 3-isopropylmalate dehydrogenase (leu-1).